A 1480-amino-acid chain; its full sequence is ABC transporter G family member 49 (1480 aa).

Over residues 1–18 (MHTTTQATPQKSMVMTTT) the composition is skewed to polar residues. Disordered stretches follow at residues 1 to 42 (MHTT…AGSS), 60 to 81 (VSGE…EDDE), and 104 to 124 (SSTR…GGAA). Composition is skewed to gly residues over residues 63-73 (ELGGGGGGGGG) and 107-123 (RGGG…GGGA). The region spanning 212-485 (LAAKLGFSHH…FESCGFKCPE (274 aa)) is the ABC transporter 1 domain. 245–252 (GPPGCGKT) serves as a coordination point for ATP. In terms of domain architecture, ABC transmembrane type-2 1 spans 563-775 (HLLKACFDRE…AEIGLTGNEF (213 aa)). Transmembrane regions (helical) follow at residues 581–601 (FLHI…GTVF), 619–639 (SLFY…VMSI), 656–676 (GWAY…VAAL), 699–719 (LLVL…VGSY), 725–745 (VGPI…GFLI), and 811–831 (VAAL…GLTI). The ABC transporter 2 domain occupies 877-1129 (ISFQDVNYYV…KVIQYFQSIP (253 aa)). 922–929 (GVTGAGKT) provides a ligand contact to ATP. An ABC transmembrane type-2 2 domain is found at 1202–1418 (EQFKACLWKQ…TLNLLFTTQF (217 aa)). The next 7 helical transmembrane spans lie at 1226–1246 (IVFM…QGNI), 1254–1274 (GLFT…INNS), 1311–1331 (IPYV…TIGY), 1340–1360 (WFFY…MLIV), 1368–1388 (VASI…GFVM), 1396–1416 (WWIW…LFTT), and 1449–1469 (LLPL…ILYG).

Belongs to the ABC transporter superfamily. ABCG family. PDR (TC 3.A.1.205) subfamily.

The protein resides in the membrane. In terms of biological role, may be a general defense protein. The protein is ABC transporter G family member 49 of Oryza sativa subsp. japonica (Rice).